Here is a 54-residue protein sequence, read N- to C-terminus: UPF0391 membrane protein Pnap_0920 (54 aa).

2 helical membrane passes run 6-26 (VVFL…IAAG) and 30-50 (IAKI…VVSL).

Belongs to the UPF0391 family.

It localises to the cell membrane. This chain is UPF0391 membrane protein Pnap_0920, found in Polaromonas naphthalenivorans (strain CJ2).